The sequence spans 1215 residues: Inner capsid protein VP3 (1215 aa).

The tract at residues 1-81 (MPRRPRRNAK…RVDNDGDVIT (81 aa)) is disordered. Low complexity predominate over residues 21 to 44 (LVAPAANASVSSTVNTTTSPTLAA). The C2H2-type zinc finger occupies 118–141 (YRCNVCNAEFPSMSAMTEHLRTSH).

Belongs to the turreted BTV-fold inner capsid family. As to quaternary structure, homodecamer; each decamer is made up of two conformers of VP2, called VP2A and VP2B. 12 homodecamers assemble to form an icosahedral capsid. Interacts with VP6.

Its subcellular location is the virion. In terms of biological role, inner capsid protein that self-assembles to form an icosahedral capsid with a T=2 symmetry, which consists of 120 copies of VP2, with channels at each of its five-fold vertices. This capsid constitutes the innermost concentric layer of the viral mature particle. The polypeptide is Inner capsid protein VP3 (S3) (Ctenopharyngodon idella (Grass carp)).